The sequence spans 345 residues: Phosphate acyltransferase (345 aa).

Belongs to the PlsX family. As to quaternary structure, homodimer. Probably interacts with PlsY.

The protein localises to the cytoplasm. The catalysed reaction is a fatty acyl-[ACP] + phosphate = an acyl phosphate + holo-[ACP]. It functions in the pathway lipid metabolism; phospholipid metabolism. Functionally, catalyzes the reversible formation of acyl-phosphate (acyl-PO(4)) from acyl-[acyl-carrier-protein] (acyl-ACP). This enzyme utilizes acyl-ACP as fatty acyl donor, but not acyl-CoA. This is Phosphate acyltransferase from Nitratidesulfovibrio vulgaris (strain ATCC 29579 / DSM 644 / CCUG 34227 / NCIMB 8303 / VKM B-1760 / Hildenborough) (Desulfovibrio vulgaris).